The chain runs to 317 residues: MSCNYADGLSAYDNKGILGAPESFDSDEVVAEKCQELAELIKKSGHVVLHTGAGISTSAGIPDFRGPKGVWTLEEKGEKPDFNVSFDEARPTKTHMAIIALIESGYVQYVISQNIDGLHLKSGLDRKYLSELHGNIYIEQCKKCRRQFVSPSAVETVGQKSLQRACKSSMDSKGRSCRSGILYDNVLDWEHDLPENDLEMGVMHSTVADLNIALGTTLQIVPSGDLPLKNLKCGGKFVICNLQPTKHDKKANLIISSYVDVVLSKVCKLLGVEIPEYSEASDPTKQSKPMEWTIPTSNVNTFHRQYKKYVYFIYYLL.

Positions 27 to 273 (DEVVAEKCQE…SKVCKLLGVE (247 aa)) constitute a Deacetylase sirtuin-type domain. Residues alanine 53, threonine 57, phenylalanine 64, arginine 65, tryptophan 71, glutamine 113, and histidine 133 each coordinate NAD(+). Catalysis depends on histidine 133, which acts as the Proton acceptor. Zn(2+) is bound by residues cysteine 141, cysteine 144, cysteine 166, and cysteine 177. Residues glycine 215, asparagine 241, glutamine 243, and valine 259 each contribute to the NAD(+) site.

Belongs to the sirtuin family. Class IV subfamily. The cofactor is Zn(2+). As to expression, widely expressed.

The protein localises to the nucleus. It localises to the chromosome. It catalyses the reaction N(6)-acetyl-L-lysyl-[protein] + NAD(+) + H2O = 2''-O-acetyl-ADP-D-ribose + nicotinamide + L-lysyl-[protein]. Functionally, NAD-dependent histone deacylase that acts as a regulator of life span. The sequence is that of NAD-dependent protein deacetylase Sirt6 from Drosophila melanogaster (Fruit fly).